A 260-amino-acid polypeptide reads, in one-letter code: Dof zinc finger protein DOF1.2 (260 aa).

The Dof-type zinc-finger motif lies at 38–92; sequence PACPRCASSNTKFCYYNNYSLSQPRYFCKGCRRYWTKGGSLRNIPVGGGCRKRSR. Zn(2+)-binding residues include C40, C43, C65, and C68. The tract at residues 83 to 124 is disordered; the sequence is VGGGCRKRSRSRQNSHKRFGRNENRPDGLINQDDGFQSSPPG. The span at 87 to 101 shows a compositional bias: basic residues; sequence CRKRSRSRQNSHKRF.

The protein resides in the nucleus. Transcription factor that binds specifically to a 5'-AA[AG]G-3' consensus core sequence. This Arabidopsis thaliana (Mouse-ear cress) protein is Dof zinc finger protein DOF1.2 (DOF1.2).